A 226-amino-acid chain; its full sequence is MRIDIITVVPDILKSPFEASILQRAIEKGLVEIHLHNLRDYTTDNYKQIDDYQFGGGAGMVMMIEPIDKCISELKSEREYNEVIYMTPDGATLNQKTANSLSLSENIIILCGHYKGVDQRVRDQFITKEISIGDYVLSGGELGAAVLCDSIIRLIPGVLGNETSALTDSFQDNLLAPPVYTRPSEYKGWEVPSILTSGNLPKIEEWRENQAYERTKKLRPDLLDDE.

S-adenosyl-L-methionine contacts are provided by residues G112 and 132-137 (IGDYVL).

The protein belongs to the RNA methyltransferase TrmD family. As to quaternary structure, homodimer.

It is found in the cytoplasm. It carries out the reaction guanosine(37) in tRNA + S-adenosyl-L-methionine = N(1)-methylguanosine(37) in tRNA + S-adenosyl-L-homocysteine + H(+). In terms of biological role, specifically methylates guanosine-37 in various tRNAs. This is tRNA (guanine-N(1)-)-methyltransferase from Christiangramia forsetii (strain DSM 17595 / CGMCC 1.15422 / KT0803) (Gramella forsetii).